A 185-amino-acid polypeptide reads, in one-letter code: Large ribosomal subunit protein uL5 (185 aa).

It belongs to the universal ribosomal protein uL5 family. Part of the 50S ribosomal subunit; part of the 5S rRNA/L5/L18/L25 subcomplex. Contacts the 5S rRNA and the P site tRNA. Forms a bridge to the 30S subunit in the 70S ribosome.

Its function is as follows. This is one of the proteins that bind and probably mediate the attachment of the 5S RNA into the large ribosomal subunit, where it forms part of the central protuberance. In the 70S ribosome it contacts protein S13 of the 30S subunit (bridge B1b), connecting the 2 subunits; this bridge is implicated in subunit movement. Contacts the P site tRNA; the 5S rRNA and some of its associated proteins might help stabilize positioning of ribosome-bound tRNAs. This chain is Large ribosomal subunit protein uL5, found in Streptomyces coelicolor (strain ATCC BAA-471 / A3(2) / M145).